The sequence spans 199 residues: Charged multivesicular body protein 1b (199 aa).

Coiled-coil stretches lie at residues 10–30 and 178–199; these read NLKFAAKELQRNSKKCDKEEK and TSVASAEQDELSQRLAKLRDQV. The tract at residues 167–199 is disordered; sequence ELPQGQTGSVGTSVASAEQDELSQRLAKLRDQV. Over residues 170-182 the composition is skewed to polar residues; the sequence is QGQTGSVGTSVAS. An MIT-interacting motif motif is present at residues 186–196; it reads DELSQRLAKLR.

It belongs to the SNF7 family. As to quaternary structure, probable peripherally associated component of the endosomal sorting required for transport complex III (ESCRT-III).

It is found in the cytoplasm. The protein localises to the cytosol. The protein resides in the endosome. Its subcellular location is the late endosome membrane. Functionally, probable peripherally associated component of the endosomal sorting required for transport complex III (ESCRT-III) which is involved in multivesicular bodies (MVBs) formation and sorting of endosomal cargo proteins into MVBs. MVBs contain intraluminal vesicles (ILVs) that are generated by invagination and scission from the limiting membrane of the endosome and mostly are delivered to lysosomes enabling degradation of membrane proteins, such as stimulated growth factor receptors, lysosomal enzymes and lipids. In Danio rerio (Zebrafish), this protein is Charged multivesicular body protein 1b (chmp1b).